Here is a 591-residue protein sequence, read N- to C-terminus: MVATSKQTTQGYVVEAYGNLLRVHVDGHVRQGEVAYVSVDDTWLKAEIIEVVGDEVKIQVFEETQGISRGALVTFSGHLLEAELGPGLLQGIFDGLQNRLEILADTSLFLRRGEYVNAICRETVWAYTQKASVGSVLSRGDVLGTVKEGRFDHKIMVPFSCFEEVTITWVISSGNYTVDTVVAKGRTSTGEELEFTMVQKWPIKQAFLEGEKVPSHEIMDVGLRVLDTQIPVLKGGTFCTPGPFGAGKTVLQHHLSKYAAVDIVVLCACGERAGEVVEILQEFPHLTDPHTGQSLMHRTCIICNTSSMPVAARESSIYLGITIAEYYRQMGLHILLLADSTSRWAQALREISGRLEEIPGEEAFPAYLASRIAAFYERGGAVKMKDGSEGSLTICGAVSPAGGNFEEPVTQATLSVVGAFCGLSKARADARRYPSIDPMISWSKYLDSVAEILEKKVPGWGESVKQASRFLEEGAEIGKRIEVVGEEGISMEDMEIFLKSELYDFCYLQQNAFDAEDCYCPFDRQIELFSLMNHIFNSRFCFDCPDNARSFFLELQSKIKTLNGQKFLSEEYQKGLEVIYKLLESKMVQTV.

242–249 lines the ATP pocket; the sequence is GPFGAGKT.

It belongs to the ATPase alpha/beta chains family.

The catalysed reaction is ATP + H2O + 4 H(+)(in) = ADP + phosphate + 5 H(+)(out). Produces ATP from ADP in the presence of a proton gradient across the membrane. The V-type alpha chain is a catalytic subunit. This chain is V-type ATP synthase alpha chain, found in Chlamydia trachomatis serovar A (strain ATCC VR-571B / DSM 19440 / HAR-13).